A 550-amino-acid polypeptide reads, in one-letter code: Hydroxylamine reductase (550 aa).

[2Fe-2S] cluster is bound by residues cysteine 3, cysteine 6, cysteine 18, and cysteine 25. Histidine 249, glutamate 273, cysteine 317, cysteine 405, cysteine 433, cysteine 458, glutamate 492, and lysine 494 together coordinate hybrid [4Fe-2O-2S] cluster. At cysteine 405 the chain carries Cysteine persulfide.

It belongs to the HCP family. [2Fe-2S] cluster is required as a cofactor. Requires hybrid [4Fe-2O-2S] cluster as cofactor.

Its subcellular location is the cytoplasm. The enzyme catalyses A + NH4(+) + H2O = hydroxylamine + AH2 + H(+). Its function is as follows. Catalyzes the reduction of hydroxylamine to form NH(3) and H(2)O. In Pectobacterium atrosepticum (strain SCRI 1043 / ATCC BAA-672) (Erwinia carotovora subsp. atroseptica), this protein is Hydroxylamine reductase.